The chain runs to 441 residues: Probable membrane metalloprotease ARASP2, chloroplastic (441 aa).

The transit peptide at 1 to 84 directs the protein to the chloroplast; it reads MLLNISSSPI…DFGSLESVLE (84 aa). Histidine 96 is a binding site for Zn(2+). Glutamate 97 is an active-site residue. Histidine 100 is a binding site for Zn(2+). A helical transmembrane segment spans residues 171-191; it reads VIVVSAGIVANVIFAYAIIFT. In terms of domain architecture, PDZ spans 196–249; it reads VGLPVQESFPGVLVPDVKSFSAASRDGLLPGDVILAVDGTELSNSGSDSVSKVV. 2 helical membrane-spanning segments follow: residues 373–393 and 407–427; these read LAVI…ALIL and VEQG…LFLI.

This sequence belongs to the peptidase M50A family. The cofactor is Zn(2+).

The protein resides in the plastid. The protein localises to the chloroplast inner membrane. Functionally, metalloprotease essential for chloroplast and plant development. May be involved in regulated intramembrane proteolysis (RIP). The polypeptide is Probable membrane metalloprotease ARASP2, chloroplastic (Arabidopsis thaliana (Mouse-ear cress)).